Here is a 174-residue protein sequence, read N- to C-terminus: DNA replication inhibitor plutonium (174 aa).

ANK repeat units follow at residues 39-68 and 72-103; these read YGNTALLKACYLGRFECARTLLEFGANIFA and FGQNALTLATYAGHLTLVKELLRRRSYKDFNL. At Thr167 the chain carries Phosphothreonine.

In terms of biological role, inhibits DNA replication early in developments. May bind and block the action of a replication or initiation factor. This is DNA replication inhibitor plutonium (plu) from Drosophila melanogaster (Fruit fly).